The sequence spans 471 residues: ATP synthase subunit beta (471 aa).

Position 152 to 159 (Gly152 to Thr159) interacts with ATP.

It belongs to the ATPase alpha/beta chains family. In terms of assembly, F-type ATPases have 2 components, CF(1) - the catalytic core - and CF(0) - the membrane proton channel. CF(1) has five subunits: alpha(3), beta(3), gamma(1), delta(1), epsilon(1). CF(0) has three main subunits: a(1), b(2) and c(9-12). The alpha and beta chains form an alternating ring which encloses part of the gamma chain. CF(1) is attached to CF(0) by a central stalk formed by the gamma and epsilon chains, while a peripheral stalk is formed by the delta and b chains.

The protein resides in the cell membrane. It catalyses the reaction ATP + H2O + 4 H(+)(in) = ADP + phosphate + 5 H(+)(out). In terms of biological role, produces ATP from ADP in the presence of a proton gradient across the membrane. The catalytic sites are hosted primarily by the beta subunits. This Herpetosiphon aurantiacus (strain ATCC 23779 / DSM 785 / 114-95) protein is ATP synthase subunit beta.